We begin with the raw amino-acid sequence, 232 residues long: MPFDPRLQPLTAAEARVLGTLMEKARTVPDSYPLTLNAVVTGCNQKSSRDPVTTLSDAEVQEALDSLRRRAMVVEIGGQRATRWEHNFTRAAGVPDQSAALLGLLMLRGPQTAGELRINAERWHRFADISSVEAFLDELQSRSEEKGGPLVALLPRAPGARESRWTHLLCGPLSAADMAAQAAQAAAPTSSARAADPALAERVAALEAEVAALRGSLAALCGQLGVSLPGQP.

Belongs to the UPF0502 family.

The protein is UPF0502 protein Aave_3438 of Paracidovorax citrulli (strain AAC00-1) (Acidovorax citrulli).